A 170-amino-acid polypeptide reads, in one-letter code: UPF0316 protein CLK_3798 (170 aa).

Helical transmembrane passes span 1–21 (MLSY…LMTI) and 36–56 (IIGF…LSGI).

The protein belongs to the UPF0316 family.

The protein localises to the cell membrane. The polypeptide is UPF0316 protein CLK_3798 (Clostridium botulinum (strain Loch Maree / Type A3)).